Consider the following 545-residue polypeptide: E3 ubiquitin-protein ligase ipaH9.8 (545 aa).

An interaction with target proteins region spans residues 1 to 242; sequence MLPINNNFSL…YHGPRIYFSM (242 aa). LRR repeat units follow at residues 57 to 77, 78 to 99, 100 to 117, 118 to 139, 140 to 157, 158 to 179, 182 to 203, and 205 to 228; these read NSDELRLDRLNLSSLPDNLPA, QITLLNVSYNQLTNLPELPVTL, KKLYSASNKLSELPVLPP, ALESLQVQHNELENLPALPDSL, LTMNISYNEIVSLPSLPQ, ALKNLRATRNFLTELPAFSEGN, VVREYFFDRNQISHIPESILNL, and NECSIHISDNPLSSHALQALQRLT. Positions 243–250 are linker; it reads SDGQQNTL. An E3 ubiquitin-protein ligase catalytic domain region spans residues 251 to 545; the sequence is HRPLADAVTA…SENGSQLHHS (295 aa). Residues 253-545 form the NEL domain; that stretch reads PLADAVTAWF…SENGSQLHHS (293 aa). The Glycyl thioester intermediate role is filled by C337.

This sequence belongs to the LRR-containing bacterial E3 ligase family. As to quaternary structure, also interacts with human and mouse U2AF1 (U2AF35). Ubiquitinated in the presence of host E1 ubiquitin-activating enzyme, E2 ubiquitin-conjugating enzyme and ubiquitin.

It is found in the secreted. It localises to the host cytoplasm. The protein localises to the host nucleus. It catalyses the reaction S-ubiquitinyl-[E2 ubiquitin-conjugating enzyme]-L-cysteine + [acceptor protein]-L-lysine = [E2 ubiquitin-conjugating enzyme]-L-cysteine + N(6)-ubiquitinyl-[acceptor protein]-L-lysine.. Exists in an autoinhibited state in the absence of substrate protein, due to interactions of the leucine-rich repeats with NEL domain. Is activated upon binding to a substrate protein. In terms of biological role, effector E3 ubiquitin ligase that interferes with host's ubiquitination pathway and modulates the acute inflammatory responses, thus facilitating bacterial colonization within the host cell. Interacts with IKBKG (NEMO) and TNIP1 (ABIN-1), a ubiquitin-binding adapter protein, which results in TNIP1-dependent 'Lys-27'-linked polyubiquitination of IKBKG. Consequently, polyubiquitinated IKBKG undergoes proteasome-dependent degradation, which perturbs NF-kappa-B activation during bacterial infection. Mediates polyubiquitination of host U2AF1, leading to its proteasomal degradation. Catalyzes 'Lys-48'-linked polyubiquitination and subsequent degradation of a subset of host guanylate-binding proteins (GBP1, GBP2, GBP4 and GBP6), thereby suppressing host cell defense. In contrast, host GBP3 and GBP7 are not ubiquitinated by IpaH9.8. Uses UBE2D2 (UBCH5B) as an E2 ubiquitin-conjugating enzyme. This is E3 ubiquitin-protein ligase ipaH9.8 (ipaH9.8) from Shigella dysenteriae serotype 1 (strain Sd197).